Here is a 121-residue protein sequence, read N- to C-terminus: Ribosome-binding factor A (121 aa).

This sequence belongs to the RbfA family. As to quaternary structure, monomer. Binds 30S ribosomal subunits, but not 50S ribosomal subunits or 70S ribosomes.

It is found in the cytoplasm. One of several proteins that assist in the late maturation steps of the functional core of the 30S ribosomal subunit. Associates with free 30S ribosomal subunits (but not with 30S subunits that are part of 70S ribosomes or polysomes). Required for efficient processing of 16S rRNA. May interact with the 5'-terminal helix region of 16S rRNA. The chain is Ribosome-binding factor A from Clostridium acetobutylicum (strain ATCC 824 / DSM 792 / JCM 1419 / IAM 19013 / LMG 5710 / NBRC 13948 / NRRL B-527 / VKM B-1787 / 2291 / W).